Here is a 374-residue protein sequence, read N- to C-terminus: MIETNPIRQRITDLNDRVLSLRGIFDYDAKKERLEEVSRELESPDVWNDAERAQALGRERSMLEKTVIGIADVLSGLADAGDLLELAESEQDEDTALAVIADLDNYQAHVEKLEFQRMFSGQMDSANAFVDIQAGAGGTEAQDWAEILLRMYLRWAESRGWKTELMEVSGGEVAGIKSATVRIEGEYAYGWLKTEIGVHRLVRKSPFDSDNRRHTSFTSVFVSPEVDDNIEIDINPADLRTDVYRSSGAGGQHVNKTESAVRITHIPTNTVVACQTGRSQHQNRDNAMKMLAAKLYELEVQKRNAEKDALEATKSDIGWGSQIRNYVLDQSRIKDLRTGIERSDTQKVLDGDLDEFVEASLKAGLAAGSKRLDA.

At Gln252 the chain carries N5-methylglutamine.

This sequence belongs to the prokaryotic/mitochondrial release factor family. Methylated by PrmC. Methylation increases the termination efficiency of RF2.

The protein resides in the cytoplasm. Its function is as follows. Peptide chain release factor 2 directs the termination of translation in response to the peptide chain termination codons UGA and UAA. The chain is Peptide chain release factor 2 from Xanthomonas euvesicatoria pv. vesicatoria (strain 85-10) (Xanthomonas campestris pv. vesicatoria).